Consider the following 362-residue polypeptide: Molybdopterin synthase catalytic subunit (362 aa).

Substrate is bound by residues 101-102 (HR), Lys117, and 124-126 (KKE).

The protein belongs to the MoaE family. MOCS2B subfamily. Heterotetramer; composed of 2 small (Mocs2A) and 2 large (Mocs2B) subunits.

The protein resides in the cytoplasm. It carries out the reaction 2 [molybdopterin-synthase sulfur-carrier protein]-C-terminal-Gly-aminoethanethioate + cyclic pyranopterin phosphate + H2O = molybdopterin + 2 [molybdopterin-synthase sulfur-carrier protein]-C-terminal Gly-Gly + 2 H(+). Its pathway is cofactor biosynthesis; molybdopterin biosynthesis. Its function is as follows. Catalytic subunit of the molybdopterin synthase complex, a complex that catalyzes the conversion of precursor Z into molybdopterin. Acts by mediating the incorporation of 2 sulfur atoms from thiocarboxylated Mocs2A into precursor Z to generate a dithiolene group. This is Molybdopterin synthase catalytic subunit from Drosophila grimshawi (Hawaiian fruit fly).